The primary structure comprises 366 residues: UDP-N-acetylenolpyruvoylglucosamine reductase (366 aa).

Residues 29-203 (VGPVARTLVT…LEVEFALDAS (175 aa)) enclose the FAD-binding PCMH-type domain. Residue Arg177 is part of the active site. The active-site Proton donor is the Ser258. Residue Glu358 is part of the active site.

It belongs to the MurB family. Requires FAD as cofactor.

The protein resides in the cytoplasm. The catalysed reaction is UDP-N-acetyl-alpha-D-muramate + NADP(+) = UDP-N-acetyl-3-O-(1-carboxyvinyl)-alpha-D-glucosamine + NADPH + H(+). The protein operates within cell wall biogenesis; peptidoglycan biosynthesis. Functionally, cell wall formation. This is UDP-N-acetylenolpyruvoylglucosamine reductase from Mycobacterium marinum (strain ATCC BAA-535 / M).